We begin with the raw amino-acid sequence, 291 residues long: Nucleotide-binding protein LMHCC_0126 (291 aa).

13 to 20 (GMSGAGKT) lines the ATP pocket. Position 63 to 66 (63 to 66 (DLRG)) interacts with GTP.

The protein belongs to the RapZ-like family.

Functionally, displays ATPase and GTPase activities. The chain is Nucleotide-binding protein LMHCC_0126 from Listeria monocytogenes serotype 4a (strain HCC23).